Consider the following 296-residue polypeptide: MEELIAIVGPTAVGKTELAVAWARRINGEIVSADSRQIYRWMDIGTAKPSPEEQAQAPHHLIDIRDPDQPFSLAEFCDLATAAIADIRGRGRIPLLVGGTGQYLAAFLEGWQVPRVAPQPDLRAELELIAAREGPAVLHARLAAVDPVAASRIPPTNVRRVVRALEVYLVSGEPISRLQERKEPPFRPRTIWLHRPRAELYARADARIERMIAAGLVEEVAGLLARGYDWSLPAMSSLGYIQFRPYFTGEADLPTCIERLRFDTHAFIRRQEMWFRRLPNLEIWTPDHPSWREITA.

9–16 (GPTAVGKT) contributes to the ATP binding site. Position 11-16 (11-16 (TAVGKT)) interacts with substrate. The tract at residues 34-37 (DSRQ) is interaction with substrate tRNA.

This sequence belongs to the IPP transferase family. As to quaternary structure, monomer. It depends on Mg(2+) as a cofactor.

The catalysed reaction is adenosine(37) in tRNA + dimethylallyl diphosphate = N(6)-dimethylallyladenosine(37) in tRNA + diphosphate. Functionally, catalyzes the transfer of a dimethylallyl group onto the adenine at position 37 in tRNAs that read codons beginning with uridine, leading to the formation of N6-(dimethylallyl)adenosine (i(6)A). The polypeptide is tRNA dimethylallyltransferase (Chloroflexus aurantiacus (strain ATCC 29366 / DSM 635 / J-10-fl)).